A 124-amino-acid polypeptide reads, in one-letter code: MFNLLLVVVGGGIGAGIRHLTNMGALRLVGPNYPWGTMAINIVGSFAMGLFIAILARRGGSNEVRLFVATGIFGGFTTFSAFSLDFATLWERGATLPAFGYALASVIGAIIALFLGLWLARSLP.

4 helical membrane-spanning segments follow: residues 1–21, 35–55, 66–86, and 99–119; these read MFNL…RHLT, WGTM…IAIL, LFVA…SLDF, and FGYA…GLWL. Gly74 and Thr77 together coordinate Na(+).

It belongs to the fluoride channel Fluc/FEX (TC 1.A.43) family.

The protein localises to the cell inner membrane. The catalysed reaction is fluoride(in) = fluoride(out). Na(+) is not transported, but it plays an essential structural role and its presence is essential for fluoride channel function. Fluoride-specific ion channel. Important for reducing fluoride concentration in the cell, thus reducing its toxicity. This is Fluoride-specific ion channel FluC from Mesorhizobium japonicum (strain LMG 29417 / CECT 9101 / MAFF 303099) (Mesorhizobium loti (strain MAFF 303099)).